The primary structure comprises 396 residues: Elongation factor Tu (396 aa).

In terms of domain architecture, tr-type G spans 10-206; it reads KPHCNIGTIG…AVDEFIPQPT (197 aa). The tract at residues 19-26 is G1; sequence GHVDHGKT. 19–26 is a binding site for GTP; that stretch reads GHVDHGKT. Threonine 26 provides a ligand contact to Mg(2+). The tract at residues 60–64 is G2; it reads GITIS. The G3 stretch occupies residues 81–84; sequence DCPG. Residues 81–85 and 136–139 contribute to the GTP site; these read DCPGH and NKVD. The interval 136–139 is G4; sequence NKVD. The segment at 174 to 176 is G5; sequence SAL.

It belongs to the TRAFAC class translation factor GTPase superfamily. Classic translation factor GTPase family. EF-Tu/EF-1A subfamily. Monomer.

It is found in the cytoplasm. The enzyme catalyses GTP + H2O = GDP + phosphate + H(+). Functionally, GTP hydrolase that promotes the GTP-dependent binding of aminoacyl-tRNA to the A-site of ribosomes during protein biosynthesis. In Pelagibacter ubique (strain HTCC1062), this protein is Elongation factor Tu.